A 108-amino-acid polypeptide reads, in one-letter code: Translation initiation factor 1A (108 aa).

The region spanning 11–85 is the S1-like domain; it reads SVKEVPKPAE…NKCDIIYKYS (75 aa).

It belongs to the eIF-1A family.

Functionally, seems to be required for maximal rate of protein biosynthesis. Enhances ribosome dissociation into subunits and stabilizes the binding of the initiator Met-tRNA(I) to 40 S ribosomal subunits. This Sulfurisphaera tokodaii (strain DSM 16993 / JCM 10545 / NBRC 100140 / 7) (Sulfolobus tokodaii) protein is Translation initiation factor 1A (eIF1A).